The following is a 340-amino-acid chain: MSKRKLSRQQRWRVEKIQAERAERAERRARRDDTSLDAGDYGPERLGRVTAHFGRTLEVEAEDEHGDLQRHRCHLRANLEGLVTGDHVVWRVAADGSGVVVARQPRQSVLERPDARGQLKPVAANIAQILIVFAVEPAPHPNLIDRYLVAAEATGITPVLVLNKTDLLPETGSDLRTLLARYRAIGYRVVAASTQQEGGLDALHACLTERTSVFVGQSGVGKSSLIDRLLPDMQLRVGALSADSRKGTHTTTTATLYHLPAGGELIDSPGIREFGLGHLEEHQVAQGFIEFQPYLGHCRFRDCRHRQEPGCALRDAVERGDILASRFDSYRHIVDGLTTR.

Positions 20–34 (ERAERAERRARRDDT) are enriched in basic and acidic residues. The tract at residues 20-42 (ERAERAERRARRDDTSLDAGDYG) is disordered. Positions 116-274 (RGQLKPVAAN…LIDSPGIREF (159 aa)) constitute a CP-type G domain. GTP-binding positions include 163–166 (NKTD) and 216–224 (GQSGVGKSS). Positions 298, 303, 305, and 311 each coordinate Zn(2+).

Belongs to the TRAFAC class YlqF/YawG GTPase family. RsgA subfamily. As to quaternary structure, monomer. Associates with 30S ribosomal subunit, binds 16S rRNA. Requires Zn(2+) as cofactor.

Its subcellular location is the cytoplasm. Functionally, one of several proteins that assist in the late maturation steps of the functional core of the 30S ribosomal subunit. Helps release RbfA from mature subunits. May play a role in the assembly of ribosomal proteins into the subunit. Circularly permuted GTPase that catalyzes slow GTP hydrolysis, GTPase activity is stimulated by the 30S ribosomal subunit. The protein is Small ribosomal subunit biogenesis GTPase RsgA of Chromohalobacter salexigens (strain ATCC BAA-138 / DSM 3043 / CIP 106854 / NCIMB 13768 / 1H11).